Consider the following 179-residue polypeptide: Large ribosomal subunit protein uL5 (179 aa).

The protein belongs to the universal ribosomal protein uL5 family. Part of the 50S ribosomal subunit; part of the 5S rRNA/L5/L18/L25 subcomplex. Contacts the 5S rRNA and the P site tRNA. Forms a bridge to the 30S subunit in the 70S ribosome.

This is one of the proteins that bind and probably mediate the attachment of the 5S RNA into the large ribosomal subunit, where it forms part of the central protuberance. In the 70S ribosome it contacts protein S13 of the 30S subunit (bridge B1b), connecting the 2 subunits; this bridge is implicated in subunit movement. Contacts the P site tRNA; the 5S rRNA and some of its associated proteins might help stabilize positioning of ribosome-bound tRNAs. The sequence is that of Large ribosomal subunit protein uL5 from Shewanella baltica (strain OS223).